We begin with the raw amino-acid sequence, 370 residues long: 3-isopropylmalate dehydrogenase (370 aa).

77–90 (GPKWDAVPYEVRPE) provides a ligand contact to NAD(+). Substrate contacts are provided by arginine 97, arginine 107, arginine 135, and aspartate 226. Residues aspartate 226, aspartate 250, and aspartate 254 each contribute to the Mg(2+) site. Residue 290 to 302 (GSAPDIAGTGVAN) participates in NAD(+) binding.

Belongs to the isocitrate and isopropylmalate dehydrogenases family. LeuB type 1 subfamily. As to quaternary structure, homodimer. The cofactor is Mg(2+). Mn(2+) is required as a cofactor.

Its subcellular location is the cytoplasm. The catalysed reaction is (2R,3S)-3-isopropylmalate + NAD(+) = 4-methyl-2-oxopentanoate + CO2 + NADH. The protein operates within amino-acid biosynthesis; L-leucine biosynthesis; L-leucine from 3-methyl-2-oxobutanoate: step 3/4. Functionally, catalyzes the oxidation of 3-carboxy-2-hydroxy-4-methylpentanoate (3-isopropylmalate) to 3-carboxy-4-methyl-2-oxopentanoate. The product decarboxylates to 4-methyl-2 oxopentanoate. The sequence is that of 3-isopropylmalate dehydrogenase from Rhizobium meliloti (strain 1021) (Ensifer meliloti).